A 628-amino-acid polypeptide reads, in one-letter code: LRR receptor kinase SERK2 (628 aa).

The N-terminal stretch at 1–31 is a signal peptide; the sequence is MAEARLLRRRRLCLAVPFVWVVAVAVSRVGA. LRR repeat units follow at residues 97–121, 123–144, 145–169, and 170–194; these read LKNL…LGNL, NLVS…TLGQ, LYKL…LTNI, and TTLQ…SFSL. N-linked (GlcNAc...) asparagine glycosylation is found at N109, N120, N133, N155, N168, and N181. A helical transmembrane segment spans residues 243 to 263; it reads AIAGGVAAAAALLFAVPAIGF. At T303 the chain carries Phosphothreonine. Positions 306-593 constitute a Protein kinase domain; sequence FSNKNILGRG…GLAERWEEWQ (288 aa). 312–320 contacts ATP; it reads LGRGGFGKV. The residue at position 329 (S329) is a Phosphoserine. K334 provides a ligand contact to ATP. T350 bears the Phosphothreonine mark. Phosphoserine occurs at positions 356 and 387. The active-site Proton acceptor is D433. Phosphothreonine occurs at positions 463, 466, and 472. S615 carries the post-translational modification Phosphoserine. Residue T616 is modified to Phosphothreonine. A Phosphoserine modification is found at S625.

It belongs to the protein kinase superfamily. Ser/Thr protein kinase family. As to quaternary structure, interacts with BRI1. Interacts with XA21, XA26/XA3 and FLS2. Post-translationally, autophosphorylated on serine and threonine residues. As to expression, expressed in flag leaves. Expressed in roots, shoot apex, leaf blades, leaf sheaths, panicles and flowers. Expressed leaves, stems, sheaths and flowers.

It is found in the cell membrane. The enzyme catalyses L-seryl-[protein] + ATP = O-phospho-L-seryl-[protein] + ADP + H(+). It carries out the reaction L-threonyl-[protein] + ATP = O-phospho-L-threonyl-[protein] + ADP + H(+). In terms of biological role, LRR receptor kinase involved in positive regulation of somatic embryogenesis and defense response against the rice blast fungus pathogen Magnaporthe oryzae. Involved in the positive regulation of receptor kinase-mediated immunity. Required for immunity mediated by the LRR receptor kinases XA21 and XA26/XA3 which recognize effectors from the bacterial pathogen Xanthomonas oryzae pv. oryzae (Xoo). Required for the immune response mediated by the LRR receptor kinase FLS2 which recognizes specifically the bacterial flagellin (flg22) effector. Kinase activity and direct interaction with the immune receptors is critical for their function. Involved in the regulation of plant growth through the brassinosteroid (BR) signaling pathway. The protein is LRR receptor kinase SERK2 of Oryza sativa subsp. japonica (Rice).